A 362-amino-acid polypeptide reads, in one-letter code: MENGLCSIQARELDEFICDYLFPDTTFLTELRADIDSISAFLKERCFQGAAHPVRVSRVVMGGSYDEHTALKGKSEAKMVLFFNNLTSFEEQLKRRGEFVEEIQKHLCQLQQEKPFKVKFEVQSSEEPNSRSLSFKLSSPELQQEVEFDVQPAYDVLYELRNNTYAEPQFYNKVYAQLIHECTTLEKEGDFSICFTDLHQNFMRYRAPKLWNLIRLVKHWYQLCKEKLREPLPPQYALELLTVYVWEHSNKNQEKVTTAKNFRTFLELVAYYKNLRIYWTWYYDFRHQEVCAYLCRQLKKARPLILDPADPTRNVAGSDLQAWDLLAKEAQTWMQSSCFRNCDMSFVPTWDLSPERQECAFQ.

It belongs to the 2-5A synthase family. Expressed at highest level in brain with lesser amounts in spleen, kidney, stomach, liver, intestine, ovary, skin and testis. Not detected in lung, thymus, heart and uterus.

Functionally, does not have 2'-5'-OAS activity, but can bind double-stranded RNA. In Mus musculus (Mouse), this protein is Inactive 2'-5' oligoadenylate synthetase 1C.